The chain runs to 213 residues: ATP phosphoribosyltransferase (213 aa).

It belongs to the ATP phosphoribosyltransferase family. Short subfamily. In terms of assembly, heteromultimer composed of HisG and HisZ subunits.

It is found in the cytoplasm. It carries out the reaction 1-(5-phospho-beta-D-ribosyl)-ATP + diphosphate = 5-phospho-alpha-D-ribose 1-diphosphate + ATP. Its pathway is amino-acid biosynthesis; L-histidine biosynthesis; L-histidine from 5-phospho-alpha-D-ribose 1-diphosphate: step 1/9. Catalyzes the condensation of ATP and 5-phosphoribose 1-diphosphate to form N'-(5'-phosphoribosyl)-ATP (PR-ATP). Has a crucial role in the pathway because the rate of histidine biosynthesis seems to be controlled primarily by regulation of HisG enzymatic activity. The polypeptide is ATP phosphoribosyltransferase (hisG) (Listeria monocytogenes serovar 1/2a (strain ATCC BAA-679 / EGD-e)).